The chain runs to 49 residues: Venom peptide 3 (49 aa).

The N-terminal stretch at 1–23 (MRFTFVLVIAATVAVLGFFGINA) is a signal peptide. AXPX repeat units follow at residues 23–26 (AEPM) and 31–34 (AEPY). A propeptide spanning residues 24 to 37 (EPMPDPHAEPYPDA) is cleaved from the precursor. Position 48 is a leucine amide (Leu48).

Expressed by the venom gland.

It localises to the secreted. This Eumenes pomiformis (Potter wasp) protein is Venom peptide 3.